A 50-amino-acid chain; its full sequence is uncharacterized protein (50 aa).

This is an uncharacterized protein from Dictyostelium discoideum (Social amoeba).